The chain runs to 277 residues: MIREPVVAGLFYPSRKDELIEQIRICFLDRRIGPGELPGPVEKNLQNPVGLVSPHAGYIYSGPVAAWGFLEVARIGKPSLVVIIGPNHTGLGKPVGIWPEGFWETPLGRVPVNEEAVEILLNSSRYAEEDTLSHLKEHSIEVQLPFLQFVFGDFSIVPVCLMDQSPTVAEDLAFAVRELMKSFRNVLIIASTDLNHYEDQKTTLKKDYLVVEAIEKRDSRLLYEYLVKEDISMCGYGGVAVLLNLGFSSVRILKHATSGDVSGDTLEVVGYLSAILS.

Belongs to the MEMO1 family.

The protein is MEMO1 family protein CTN_0605 of Thermotoga neapolitana (strain ATCC 49049 / DSM 4359 / NBRC 107923 / NS-E).